A 90-amino-acid polypeptide reads, in one-letter code: Probable Fe(2+)-trafficking protein (90 aa).

It belongs to the Fe(2+)-trafficking protein family.

Could be a mediator in iron transactions between iron acquisition and iron-requiring processes, such as synthesis and/or repair of Fe-S clusters in biosynthetic enzymes. The protein is Probable Fe(2+)-trafficking protein of Variovorax paradoxus (strain S110).